The chain runs to 107 residues: Parvalbumin beta (107 aa).

Ser-1 is subject to N-acetylserine. EF-hand domains are found at residues 37-72 (KSLD…FSPS) and 76-107 (LTDA…MIKA). Asp-50, Asp-52, Ser-54, Phe-56, Glu-58, Glu-61, Asp-89, Asp-91, Asp-93, Met-95, and Glu-100 together coordinate Ca(2+).

Belongs to the parvalbumin family.

In muscle, parvalbumin is thought to be involved in relaxation after contraction. It binds two calcium ions. The polypeptide is Parvalbumin beta (Esox lucius (Northern pike)).